Consider the following 584-residue polypeptide: UvrABC system protein C (584 aa).

Residues asparagine 12–valine 89 form the GIY-YIG domain. One can recognise a UVR domain in the interval asparagine 194–isoleucine 229.

The protein belongs to the UvrC family. As to quaternary structure, interacts with UvrB in an incision complex.

It is found in the cytoplasm. Its function is as follows. The UvrABC repair system catalyzes the recognition and processing of DNA lesions. UvrC both incises the 5' and 3' sides of the lesion. The N-terminal half is responsible for the 3' incision and the C-terminal half is responsible for the 5' incision. The protein is UvrABC system protein C of Mycoplasma mycoides subsp. mycoides SC (strain CCUG 32753 / NCTC 10114 / PG1).